Here is a 532-residue protein sequence, read N- to C-terminus: Di/tripeptide-binding protein 2 (532 aa).

Positions 1–24 (MRPRSALRYSLLLLAFAASAAIQA) are cleaved as a signal peptide.

It belongs to the bacterial solute-binding protein 5 family. In terms of assembly, the complex is composed of two ATP-binding proteins (DppD and DppF), two transmembrane proteins (DppB and DppC) and a solute-binding protein (DppA2). Five orthologous SBPs (DppA1-A5) are present in P.aeruginosa, which increases the substrate specificity of the DppBCDF transporter.

Its function is as follows. Part of the ABC transporter DppABCDF involved in the uptake of various di/tripeptides. Shows high flexibility on substrate recognition. Efficiently uses tripeptides. This chain is Di/tripeptide-binding protein 2, found in Pseudomonas aeruginosa (strain UCBPP-PA14).